The following is a 70-amino-acid chain: Cecropin-P1 (70 aa).

Positions 1–13 are cleaved as a signal peptide; it reads MFLIYLFVQTAES. A propeptide spans 45 to 70 (removed in mature form); the sequence is RRRFVAEQDAIHSRVSREVPTLSDSV.

Expressed in the body wall, intestine, uterus and ovary.

The protein resides in the secreted. In terms of biological role, has antibacterial activity against several Gram-positive and Gram-negative bacteria. Is weakly active against yeasts. Acts by a nonpore mechanism. The protein is Cecropin-P1 (ASCEC-1) of Ascaris suum (Pig roundworm).